A 245-amino-acid chain; its full sequence is 8-amino-3,8-dideoxy-manno-octulosonate cytidylyltransferase (245 aa).

It belongs to the KdsB family.

The protein localises to the cytoplasm. The enzyme catalyses 8-amino-3,8-dideoxy-alpha-D-manno-octulosonate + CTP = CMP-8-amino-3,8-dideoxy-alpha-D-manno-oct-2-ulosonate + diphosphate. It participates in bacterial outer membrane biogenesis; lipopolysaccharide biosynthesis. Activates KDO8N (a required 8-carbon sugar) for incorporation into bacterial lipopolysaccharide in the Shewanella genus. In Shewanella halifaxensis (strain HAW-EB4), this protein is 8-amino-3,8-dideoxy-manno-octulosonate cytidylyltransferase.